The chain runs to 518 residues: Ribonuclease Y (518 aa).

Residues 2-22 (GSIIISALLALVIGAVVGFFV) traverse the membrane as a helical segment. The 64-residue stretch at 208–271 (TVSVVNLPND…ETARIALDKL (64 aa)) folds into the KH domain. Positions 334–427 (VLKHSVEVAF…VAAADALSAA (94 aa)) constitute an HD domain.

The protein belongs to the RNase Y family.

The protein resides in the cell membrane. In terms of biological role, endoribonuclease that initiates mRNA decay. The polypeptide is Ribonuclease Y (Geobacillus thermodenitrificans (strain NG80-2)).